The primary structure comprises 617 residues: Dihydroxy-acid dehydratase (617 aa).

A Mg(2+)-binding site is contributed by D81. C122 lines the [2Fe-2S] cluster pocket. Residues D123 and K124 each coordinate Mg(2+). K124 bears the N6-carboxylysine mark. A [2Fe-2S] cluster-binding site is contributed by C195. E491 is a binding site for Mg(2+). S517 serves as the catalytic Proton acceptor.

This sequence belongs to the IlvD/Edd family. As to quaternary structure, homodimer. [2Fe-2S] cluster serves as cofactor. It depends on Mg(2+) as a cofactor.

The enzyme catalyses (2R)-2,3-dihydroxy-3-methylbutanoate = 3-methyl-2-oxobutanoate + H2O. It carries out the reaction (2R,3R)-2,3-dihydroxy-3-methylpentanoate = (S)-3-methyl-2-oxopentanoate + H2O. It participates in amino-acid biosynthesis; L-isoleucine biosynthesis; L-isoleucine from 2-oxobutanoate: step 3/4. The protein operates within amino-acid biosynthesis; L-valine biosynthesis; L-valine from pyruvate: step 3/4. In terms of biological role, functions in the biosynthesis of branched-chain amino acids. Catalyzes the dehydration of (2R,3R)-2,3-dihydroxy-3-methylpentanoate (2,3-dihydroxy-3-methylvalerate) into 2-oxo-3-methylpentanoate (2-oxo-3-methylvalerate) and of (2R)-2,3-dihydroxy-3-methylbutanoate (2,3-dihydroxyisovalerate) into 2-oxo-3-methylbutanoate (2-oxoisovalerate), the penultimate precursor to L-isoleucine and L-valine, respectively. The chain is Dihydroxy-acid dehydratase from Buchnera aphidicola subsp. Acyrthosiphon pisum (strain 5A).